The sequence spans 377 residues: Probable riboflavin import permease protein RfuC (377 aa).

The next 10 membrane-spanning stretches (helical) occupy residues 4-24, 49-69, 72-92, 98-118, 135-155, 182-202, 223-245, 249-268, 274-294, and 303-323; these read VINS…VIVL, ALFH…CALK, MINL…ALLL, VGFL…AGIL, ITSF…IITV, FGVP…GCFF, FVGF…LFGL, FSVV…GMGY, ALIA…FAWM, and LGAH…FLLI.

Belongs to the binding-protein-dependent transport system permease family. In terms of assembly, the complex is probably composed of two ATP-binding proteins (RfuB), two transmembrane proteins (RfuC and RfuD) and a solute-binding protein (RfuA).

It is found in the cell inner membrane. Probably part of the ABC transporter complex RfuABCD involved in riboflavin import. Probably responsible for the translocation of the substrate across the membrane. This chain is Probable riboflavin import permease protein RfuC, found in Treponema pallidum (strain Nichols).